The primary structure comprises 570 residues: Repressible high-affinity phosphate permease (570 aa).

The Cytoplasmic segment spans residues 1 to 61 (MSTPQKTAGG…AVAGVGFFTD (61 aa)). A helical membrane pass occupies residues 62 to 82 (SYDIFTVSLLTLMLGIVYFPG). Topologically, residues 83–95 (EGKMPTTSDTAIK) are extracellular. A helical membrane pass occupies residues 96–116 (LATSAGTVIGQVGFGAAADVF). Residues 117–120 (GRKS) lie on the Cytoplasmic side of the membrane. Residues 121–141 (MYGLELLFIIFATLAQALASG) form a helical membrane-spanning segment. Residues 142-143 (SP) are Extracellular-facing. A helical transmembrane segment spans residues 144-164 (SINIIGIIIFWRVLMGVGIGG). The Cytoplasmic portion of the chain corresponds to 165–186 (DYPLSSIITSEFATTKWRGAMM). The chain crosses the membrane as a helical span at residues 187–207 (GAVFAMQGLGQLAAAFVMLFV). Over 208-237 (TLGFKKSLEAAPTLASCTGDCAVAVDKMWR) the chain is Extracellular. A helical transmembrane segment spans residues 238–258 (TVIGVGAVPGCIALYYRLTIP). Over 259–325 (ETPRYTFDVK…FFRHYSKRKN (67 aa)) the chain is Cytoplasmic. The helical transmembrane segment at 326–346 (AMLLAGTALSWCFLDIAYYGV) threads the bilayer. Residues 347–374 (SLNNATILNVIGYSTTGAKNTYEILYNT) are Extracellular-facing. The helical transmembrane segment at 375–395 (AVGNLIIVLAGAVPGYWVTVF) threads the bilayer. Over 396-403 (TVDTVGRK) the chain is Cytoplasmic. A helical membrane pass occupies residues 404–424 (PIQFMGFGILTILFVVMGFAY). Residues 425–433 (KHLSPHALL) are Extracellular-facing. The helical transmembrane segment at 434–454 (AIFVLAQFFFNFGPNATTFIV) threads the bilayer. The Cytoplasmic segment spans residues 455–468 (PGEVFPTRYRSTSH). A helical transmembrane segment spans residues 469–489 (GLSAAMGKIGSIIGQGAIAPL). Residues 490–505 (RTRGAVKGGNPNPWMN) lie on the Extracellular side of the membrane. A helical membrane pass occupies residues 506-526 (HVLEIYALFMLLGVGTTFLIP). Residues 527–570 (ETKRKTLEELSGEFDMSGEEEAQRDTTLTEHKTEAPTSSAAVNA) are Cytoplasmic-facing. The segment covering 537–546 (SGEFDMSGEE) has biased composition (acidic residues). The segment at 537 to 570 (SGEFDMSGEEEAQRDTTLTEHKTEAPTSSAAVNA) is disordered. A compositionally biased stretch (basic and acidic residues) spans 547 to 560 (EAQRDTTLTEHKTE). The span at 561 to 570 (APTSSAAVNA) shows a compositional bias: polar residues.

It belongs to the major facilitator superfamily. Sugar transporter (TC 2.A.1.1) family.

It is found in the cell membrane. Phosphate transport activity is competitively inhibited by arsenate. In terms of biological role, high-affinity transporter for external inorganic phosphate. Acts probably as a H(+)-phosphate symporter. This Neurospora crassa (strain ATCC 24698 / 74-OR23-1A / CBS 708.71 / DSM 1257 / FGSC 987) protein is Repressible high-affinity phosphate permease.